The chain runs to 135 residues: Galectin-1 (135 aa).

The residue at position 2 (A2) is an N-acetylalanine. The region spanning 4 to 135 is the Galectin domain; it reads GLVASNLNLK…DFKIKCVAFE (132 aa). N6-acetyllysine occurs at positions 13, 19, and 29. S30 is subject to Phosphoserine. Residues 45–49, H53, N62, and 69–72 contribute to the a beta-D-galactoside site; these read HFNPR and WGTE. At K108 the chain carries N6-acetyllysine; alternate. At K108 the chain carries N6-succinyllysine; alternate. The residue at position 128 (K128) is an N6-acetyllysine.

In terms of assembly, homodimer. Binds LGALS3BP. Interacts with CD2, CD3, CD4, CD6, CD7, CD43, ALCAM and CD45. Interacts with laminin (via poly-N-acetyllactosamine). Interacts with SUSD2. Interacts with cargo receptor TMED10; the interaction mediates the translocation from the cytoplasm into the ERGIC (endoplasmic reticulum-Golgi intermediate compartment) and thereby secretion. Interacts with CD69.

The protein resides in the secreted. Its subcellular location is the extracellular space. It localises to the extracellular matrix. It is found in the cytoplasm. In terms of biological role, lectin that binds beta-galactoside and a wide array of complex carbohydrates. Plays a role in regulating apoptosis, cell proliferation and cell differentiation. Inhibits CD45 protein phosphatase activity and therefore the dephosphorylation of Lyn kinase. Strong inducer of T-cell apoptosis. Plays a negative role in Th17 cell differentiation via activation of the receptor CD69. The polypeptide is Galectin-1 (Lgals1) (Rattus norvegicus (Rat)).